The following is a 704-amino-acid chain: Neutral ceramidase (704 aa).

The N-terminal stretch at 1–23 (MAISKIAFLALIALSGLCGLASA) is a signal peptide. N-linked (GlcNAc...) asparagine glycosylation is present at Asn230. Residue Ser276 is the Nucleophile of the active site. N-linked (GlcNAc...) asparagine glycosylation is found at Asn362, Asn550, and Asn598.

This sequence belongs to the neutral ceramidase family. Post-translationally, N-glycosylated.

It localises to the secreted. The enzyme catalyses an N-acylsphing-4-enine + H2O = sphing-4-enine + a fatty acid. Its function is as follows. Hydrolyzes the sphingolipid ceramide into sphingosine and free fatty acid at an optimal pH of 6.5-7.5. Acts as a key regulator of sphingolipid signaling metabolites by generating sphingosine at the cell surface. In Drosophila pseudoobscura pseudoobscura (Fruit fly), this protein is Neutral ceramidase (CDase).